Here is a 956-residue protein sequence, read N- to C-terminus: MGKVSANNQSGFFKFYIDTALLLNAEFISSFTNCINSEYNGKVKISYSSSSQQFKVIVYEEHKREAFSLFEEIVQKLKRESTVYKKPRLDIHPFGQLHYDFTTLLNFQRYLDLGYGIEDVKIKENEDIVKSKVGKKPTSSDFYIPCLIKPKIITPFEWEGNFKQVIYSPTVYNGSFKRLFYLPDNNDLLKEFAHATNTKYKASLKDNKIVVLANNDQDINAMLEKMKHIENLVSQKVYEYPEETLVYAGKIAPCQLKFLKLKFENEILYTAMHTTSIFKSVFNILGSFYTMRLLRNKHDGDSYELVPVFAKNPSKTPPCNDNFKIFSDDIKLIGCKIFAGVSLNFSSPKPAHRFYELNKTSSNLSIPVLQKPSNFHSSSTELSDNSIHQGRRAVDPVVNQNNPSNFEEMIMNKLNKLPTIDKQILGTSSLTHFQDKTTAIEHSINKSNSKQPPRFKFQLPPRPTSNTLPLEPEEELVTRYSVSSDGNTVDEAITKQSQTFQLVNSNEFNEVNANDVHKSLRQNCAKLDFDDSKSKNLLSVECLELDKGSDCSTPKSGSLTPSIDMKFLRLQDEKMDDLGDNYYTILMSSNPVSSYGVGSLYLFQPKIVCSEKYINHEEIDNMNLKSLHRWLSRSLHVLQSFSGEIELNLEFGVILYPNISSDVSACSHGFMNIYKDLNLPRSYFADCITKSVSNIDSLLNTPVKILFGRTEYTYPLIEHEVLDSKNYFVFKGSLLFTDDKRNKTEDSTVFFSMICSSKLDQFAFYKDSKQSSTCTINFPLALWDSRLRIETKVPLNDAILTEFSKSIRFRNVNKDLLLVFGNMEDRVIIHSVTRINENSVPFNKNLLPHSLEFILKCSKVKSYDISPSSINSKEAFVCLDRSKESKPIESCFSLSIQSVYMQSQFKYNNSIRAGETAPWKLANKQFIGGAITENVSDLYTAAIIMVNQLGGIHPTI.

The protein localises to the cytoplasm. It localises to the cytoskeleton. Its subcellular location is the microtubule organizing center. The protein resides in the spindle pole body. Involved in RNAi-dependent heterochromatin formation and centromeric silencing. Required for the conversion of centromeric pre-small interfering RNA transcripts into small interfering RNAs, histone H3 'Lys9' methylation, and the recruitment of the RITS complex to centromeric sequences. In Schizosaccharomyces pombe (strain 972 / ATCC 24843) (Fission yeast), this protein is RNA-silencing factor ers1 (ers1).